Here is a 156-residue protein sequence, read N- to C-terminus: MSRKGPAPKRDVNPDPIYNSKMVTKFINKLMLDGKKGLSQRIFYKALELVGERTNEEPLEVFETAVKNVMPVLEVKARRVGGATYQVPVEVEPNRKQVLAIRWIVNYARERGERAMSERLAGELIDAYNNTGGAIKKKEDTHKMAEANKAFAHYRW.

Belongs to the universal ribosomal protein uS7 family. As to quaternary structure, part of the 30S ribosomal subunit. Contacts proteins S9 and S11.

Functionally, one of the primary rRNA binding proteins, it binds directly to 16S rRNA where it nucleates assembly of the head domain of the 30S subunit. Is located at the subunit interface close to the decoding center, probably blocks exit of the E-site tRNA. The sequence is that of Small ribosomal subunit protein uS7 from Natranaerobius thermophilus (strain ATCC BAA-1301 / DSM 18059 / JW/NM-WN-LF).